Consider the following 429-residue polypeptide: 3-phosphoshikimate 1-carboxyvinyltransferase (429 aa).

Residues Lys23, Ser24, and Arg28 each contribute to the 3-phosphoshikimate site. Lys23 lines the phosphoenolpyruvate pocket. Residues Gly95 and Arg123 each contribute to the phosphoenolpyruvate site. Residues Ser168, Gln170, Asp316, and Lys343 each contribute to the 3-phosphoshikimate site. Residue Gln170 participates in phosphoenolpyruvate binding. Residue Asp316 is the Proton acceptor of the active site. Residues Arg347 and Arg389 each contribute to the phosphoenolpyruvate site.

It belongs to the EPSP synthase family. Monomer.

It is found in the cytoplasm. It carries out the reaction 3-phosphoshikimate + phosphoenolpyruvate = 5-O-(1-carboxyvinyl)-3-phosphoshikimate + phosphate. The protein operates within metabolic intermediate biosynthesis; chorismate biosynthesis; chorismate from D-erythrose 4-phosphate and phosphoenolpyruvate: step 6/7. Functionally, catalyzes the transfer of the enolpyruvyl moiety of phosphoenolpyruvate (PEP) to the 5-hydroxyl of shikimate-3-phosphate (S3P) to produce enolpyruvyl shikimate-3-phosphate and inorganic phosphate. This Bacillus thuringiensis (strain Al Hakam) protein is 3-phosphoshikimate 1-carboxyvinyltransferase.